A 432-amino-acid chain; its full sequence is Glutamate--tRNA ligase 2 (432 aa).

The 'HIGH' region signature appears at Pro6–Asn16. A 'KMSKS' region motif is present at residues Lys235–Arg239. Lys238 provides a ligand contact to ATP.

The protein belongs to the class-I aminoacyl-tRNA synthetase family. Glutamate--tRNA ligase type 1 subfamily. As to quaternary structure, monomer.

Its subcellular location is the cytoplasm. It catalyses the reaction tRNA(Glu) + L-glutamate + ATP = L-glutamyl-tRNA(Glu) + AMP + diphosphate. Functionally, catalyzes the attachment of glutamate to tRNA(Glu) in a two-step reaction: glutamate is first activated by ATP to form Glu-AMP and then transferred to the acceptor end of tRNA(Glu). The protein is Glutamate--tRNA ligase 2 of Sulfurimonas denitrificans (strain ATCC 33889 / DSM 1251) (Thiomicrospira denitrificans (strain ATCC 33889 / DSM 1251)).